Consider the following 95-residue polypeptide: Acylphosphatase (95 aa).

Positions 10-95 (CIHVTVSGKV…VEDYSDFRVR (86 aa)) constitute an Acylphosphatase-like domain. Active-site residues include arginine 25 and asparagine 43.

The protein belongs to the acylphosphatase family.

It catalyses the reaction an acyl phosphate + H2O = a carboxylate + phosphate + H(+). This is Acylphosphatase (acyP) from Coxiella burnetii (strain RSA 493 / Nine Mile phase I).